The following is a 184-amino-acid chain: Der GTPase-activating protein YihI (184 aa).

The disordered stretch occupies residues 1–107; that stretch reads MNRPVKGAAD…VVAAKPTMSP (107 aa). Residues 21 to 32 are compositionally biased toward basic and acidic residues; sequence TREELEREARER. Low complexity predominate over residues 80 to 95; that stretch reads SAVAKPKPKSKPSAPV.

The protein belongs to the YihI family. In terms of assembly, interacts with Der.

Functionally, a GTPase-activating protein (GAP) that modifies Der/EngA GTPase function. May play a role in ribosome biogenesis. The chain is Der GTPase-activating protein YihI from Pectobacterium carotovorum subsp. carotovorum (strain PC1).